A 254-amino-acid chain; its full sequence is Ciliary microtubule associated protein 1A (254 aa).

STPGR repeat units follow at residues 180–205 and 216–241; these read PGPA…MAAR and PGPG…FGIK. Residues 207 to 228 form a disordered region; it reads EPPGDKTLKPGPGAHSPEKVTL.

The protein belongs to the CIMAP family. Microtubule inner protein component of sperm flagellar doublet microtubules. In terms of tissue distribution, testis-specific (at protein level). Expression restricted to the germ cell fraction, absent in somatic cell fractions such as Sertoli and Leydig cells. Expression detected in the third week postpartum (23 days) after haploid germ cells developed, expression increased with age. Expressed in the tails of elongated spermatids sticking out toward the tubular lumen, and in cytoplasmic droplets still attached to the spermatid tail membrane. Expressed in the tails of mature sperm, from the connecting piece proximal to the head, along the middle and principal pieces, down to the distal end piece.

It localises to the cytoplasm. The protein localises to the cytoskeleton. The protein resides in the flagellum axoneme. Outer dense fibers are filamentous structures located on the outside of the axoneme in the midpiece and principal piece of the mammalian sperm tail. May help to maintain the passive elastic structures and elastic recoil of the sperm tail. This is Ciliary microtubule associated protein 1A (Cimap1a) from Mus musculus (Mouse).